A 157-amino-acid chain; its full sequence is Ribosome maturation factor RimP (157 aa).

This sequence belongs to the RimP family.

The protein resides in the cytoplasm. Functionally, required for maturation of 30S ribosomal subunits. The polypeptide is Ribosome maturation factor RimP (Synechococcus sp. (strain JA-3-3Ab) (Cyanobacteria bacterium Yellowstone A-Prime)).